We begin with the raw amino-acid sequence, 84 residues long: Exodeoxyribonuclease 7 small subunit (84 aa).

The protein belongs to the XseB family. As to quaternary structure, heterooligomer composed of large and small subunits.

Its subcellular location is the cytoplasm. It catalyses the reaction Exonucleolytic cleavage in either 5'- to 3'- or 3'- to 5'-direction to yield nucleoside 5'-phosphates.. Functionally, bidirectionally degrades single-stranded DNA into large acid-insoluble oligonucleotides, which are then degraded further into small acid-soluble oligonucleotides. The polypeptide is Exodeoxyribonuclease 7 small subunit (Haemophilus influenzae (strain ATCC 51907 / DSM 11121 / KW20 / Rd)).